The primary structure comprises 259 residues: GTP cyclohydrolase FolE2 (259 aa).

Belongs to the GTP cyclohydrolase IV family.

The enzyme catalyses GTP + H2O = 7,8-dihydroneopterin 3'-triphosphate + formate + H(+). It functions in the pathway cofactor biosynthesis; 7,8-dihydroneopterin triphosphate biosynthesis; 7,8-dihydroneopterin triphosphate from GTP: step 1/1. Its function is as follows. Converts GTP to 7,8-dihydroneopterin triphosphate. The chain is GTP cyclohydrolase FolE2 from Thermotoga petrophila (strain ATCC BAA-488 / DSM 13995 / JCM 10881 / RKU-1).